We begin with the raw amino-acid sequence, 242 residues long: MEFQSDLTREISPQRKLGRGKIEIKRIENTTNRQVTFCKRRNGLLKKAYELSVLCDAEVALIVFSSRGRLYEYANNSVKATIERYKKACSDSSNTGSIAEANAQYYQQEASKLRAQIGNLQNQNRNFLGESLAALNLRDLRNLEQKIEKGISKIRAKKNELLFAEIEYMQKREIDLHNNNQYLRAKIAETERSQQMNLMPGSSSYDLVPPQQSFDARNYLQVNGLQTNNHYPRQDQPPLQLV.

The MADS-box domain occupies 19 to 73; the sequence is RGKIEIKRIENTTNRQVTFCKRRNGLLKKAYELSVLCDAEVALIVFSSRGRLYEY. Residues 103 to 193 enclose the K-box domain; sequence AQYYQQEASK…RAKIAETERS (91 aa).

Expressed exclusively in stamens and carpels.

Its subcellular location is the nucleus. Functionally, probable transcription factor involved in regulating genes that determines stamen and carpel development in wild-type flowers. The protein is Floral homeotic protein AGAMOUS (AG1) of Petunia hybrida (Petunia).